The primary structure comprises 628 residues: Netrin-4 (628 aa).

Positions 1–19 (MGSCARLLLLWGCSAVAAG) are cleaved as a signal peptide. Residues 30–261 (CEKACNPRMG…AVYDFIVKGS (232 aa)) form the Laminin N-terminal domain. Residues asparagine 56 and asparagine 163 are each glycosylated (N-linked (GlcNAc...) asparagine). Disulfide bonds link cysteine 262/cysteine 271, cysteine 264/cysteine 293, cysteine 295/cysteine 304, cysteine 307/cysteine 329, cysteine 332/cysteine 341, cysteine 334/cysteine 359, cysteine 362/cysteine 371, cysteine 374/cysteine 392, cysteine 395/cysteine 413, cysteine 397/cysteine 420, cysteine 422/cysteine 431, and cysteine 434/cysteine 446. Laminin EGF-like domains follow at residues 262-331 (CFCN…ECRT), 332-394 (CKCN…ACKA), and 395-448 (CSCH…GCRP). A glycan (N-linked (GlcNAc...) asparagine) is linked at asparagine 353. Residue asparagine 483 is glycosylated (N-linked (GlcNAc...) asparagine). 2 disulfides stabilise this stretch: cysteine 506-cysteine 576 and cysteine 520-cysteine 627. The NTR domain occupies 506 to 627 (CECKEQVLGN…RVMHILKRDC (122 aa)).

In terms of assembly, may form a homodimer. In terms of tissue distribution, expressed in kidney, liver, heart, ovary, testis, retina, brain, olfactory bulb, and widely expressed in embryo.

The protein resides in the secreted. It is found in the extracellular space. Its subcellular location is the extracellular matrix. The protein localises to the basement membrane. Functionally, may play an important role in neural, kidney and vascular development. Promotes neurite elongation from olfactory bulb explants. This is Netrin-4 (Ntn4) from Mus musculus (Mouse).